The primary structure comprises 219 residues: Ribosomal RNA small subunit methyltransferase I (219 aa).

It belongs to the methyltransferase superfamily. RsmI family.

The protein resides in the cytoplasm. The catalysed reaction is cytidine(1402) in 16S rRNA + S-adenosyl-L-methionine = 2'-O-methylcytidine(1402) in 16S rRNA + S-adenosyl-L-homocysteine + H(+). Functionally, catalyzes the 2'-O-methylation of the ribose of cytidine 1402 (C1402) in 16S rRNA. The chain is Ribosomal RNA small subunit methyltransferase I from Coprothermobacter proteolyticus (strain ATCC 35245 / DSM 5265 / OCM 4 / BT).